A 393-amino-acid polypeptide reads, in one-letter code: tRNA-specific 2-thiouridylase MnmA (393 aa).

Residues 19-26 (AMSGGVDS) and L45 contribute to the ATP site. C113 serves as the catalytic Nucleophile. A disulfide bond links C113 and C210. G137 serves as a coordination point for ATP. The tract at residues 160–162 (RDQ) is interaction with tRNA. Residue C210 is the Cysteine persulfide intermediate of the active site.

It belongs to the MnmA/TRMU family.

The protein localises to the cytoplasm. It carries out the reaction S-sulfanyl-L-cysteinyl-[protein] + uridine(34) in tRNA + AH2 + ATP = 2-thiouridine(34) in tRNA + L-cysteinyl-[protein] + A + AMP + diphosphate + H(+). Its function is as follows. Catalyzes the 2-thiolation of uridine at the wobble position (U34) of tRNA, leading to the formation of s(2)U34. The chain is tRNA-specific 2-thiouridylase MnmA from Bradyrhizobium diazoefficiens (strain JCM 10833 / BCRC 13528 / IAM 13628 / NBRC 14792 / USDA 110).